A 100-amino-acid polypeptide reads, in one-letter code: Small ribosomal subunit protein uS14 (100 aa).

Belongs to the universal ribosomal protein uS14 family. Part of the 30S ribosomal subunit. Contacts proteins S3 and S10.

Its function is as follows. Binds 16S rRNA, required for the assembly of 30S particles and may also be responsible for determining the conformation of the 16S rRNA at the A site. The polypeptide is Small ribosomal subunit protein uS14 (Synechococcus sp. (strain CC9902)).